The primary structure comprises 651 residues: Protein RcaC (651 aa).

In terms of domain architecture, Response regulatory 1 spans 2-116 (KILLVEDDDV…ELIARIRALL (115 aa)). Position 51 is a 4-aspartylphosphate (aspartate 51). Residues 124–223 (FPLLTWGDLL…MHGRGYYLKA (100 aa)) constitute a DNA-binding region (ompR/PhoB-type). Response regulatory domains are found at residues 384-519 (LLLM…VNLL) and 527-643 (KVMI…LRRL).

Its function is as follows. Required for chromatic adaptation. Thought to be a positive regulator of phycobiliproteins. The protein is Protein RcaC (rcaC) of Microchaete diplosiphon (Fremyella diplosiphon).